Reading from the N-terminus, the 432-residue chain is Ectonucleoside triphosphate diphosphohydrolase 5 (432 aa).

An N-terminal signal peptide occupies residues 1 to 24; that stretch reads MALYQGAAFFMLVASCVCSTVFHR. Residue glutamate 175 is the Proton acceptor of the active site. Residue asparagine 235 is glycosylated (N-linked (GlcNAc...) asparagine). Intrachain disulfides connect cysteine 275–cysteine 307 and cysteine 367–cysteine 381. The N-linked (GlcNAc...) asparagine glycan is linked to asparagine 372.

This sequence belongs to the GDA1/CD39 NTPase family. As to quaternary structure, monomer; active form. Homodimer; disulfide-linked. Homodimers are enzymatically inactive. Ca(2+) is required as a cofactor. The cofactor is Mg(2+). Post-translationally, N-glycosylated; high-mannose type.

The protein resides in the endoplasmic reticulum. It localises to the secreted. It carries out the reaction a ribonucleoside 5'-diphosphate + H2O = a ribonucleoside 5'-phosphate + phosphate + H(+). It catalyses the reaction GDP + H2O = GMP + phosphate + H(+). The enzyme catalyses UDP + H2O = UMP + phosphate + H(+). The catalysed reaction is IDP + H2O = IMP + phosphate + H(+). It carries out the reaction CDP + H2O = CMP + phosphate + H(+). It catalyses the reaction ADP + H2O = AMP + phosphate + H(+). Its pathway is protein modification; protein glycosylation. Its function is as follows. Hydrolyzes nucleoside diphosphates with a preference for GDP, IDP and UDP compared to ADP and CDP. In the lumen of the endoplasmic reticulum, hydrolyzes UDP that acts as an end-product feedback inhibitor of the UDP-Glc:glycoprotein glucosyltransferases. UMP can be transported back by an UDP-sugar antiporter to the cytosol where it is consumed to regenerate UDP-glucose. Therefore, it positively regulates protein reglucosylation by clearing UDP from the ER lumen and by promoting the regeneration of UDP-glucose. Protein reglucosylation is essential to proper glycoprotein folding and quality control in the ER. The chain is Ectonucleoside triphosphate diphosphohydrolase 5 (ENTPD5) from Bos taurus (Bovine).